The chain runs to 278 residues: Cell division protein FtsQ (278 aa).

Residues 1-6 are Cytoplasmic-facing; sequence MNATLR. A helical membrane pass occupies residues 7 to 27; the sequence is ILAWLIAVALVALPVVAVLNG. Residues 28–278 lie on the Periplasmic side of the membrane; it reads WVGAERWPLA…SPFAIPGFKT (251 aa). One can recognise a POTRA domain in the interval 34 to 103; it reads WPLARLRVSG…DVLEVHVVEH (70 aa).

It belongs to the FtsQ/DivIB family. FtsQ subfamily. In terms of assembly, part of a complex composed of FtsB, FtsL and FtsQ.

It localises to the cell inner membrane. Essential cell division protein. May link together the upstream cell division proteins, which are predominantly cytoplasmic, with the downstream cell division proteins, which are predominantly periplasmic. May control correct divisome assembly. The polypeptide is Cell division protein FtsQ (Xanthomonas campestris pv. campestris (strain ATCC 33913 / DSM 3586 / NCPPB 528 / LMG 568 / P 25)).